A 481-amino-acid polypeptide reads, in one-letter code: NADH-quinone oxidoreductase subunit N (481 aa).

13 helical membrane passes run 9–29 (MLPELYLLGSAMIALLLGIVV), 39–59 (AVSMGVVVVLSWWSGVTDHVA), 76–96 (CISRMLVGVAGFVASLLFLCA), 104–124 (FSVVMLFATLGAMTLVQAGHF), 158–178 (FFILSALSSCIMLYGISLVYG), 205–225 (AFVLVGVLFKLAVVPFHMWAV), 232–252 (PMAAMAFFLIVTKSAAILLLA), 265–285 (ILYGIISVSGLSALVGELGAL), 293–313 (LLAYSNIGQLGYVLPVVVLHG), 318–338 (AIFHYVLTSWVINAWIFSVLL), 359–379 (FVAFALVVSMVSAAGFPPFLG), 399–419 (VAFPYVLLVCAVGIVPCFYCF), and 443–463 (LGLTVIAVVCMLLSVIALFLA).

Belongs to the complex I subunit 2 family. As to quaternary structure, NDH-1 is composed of 14 different subunits. Subunits NuoA, H, J, K, L, M, N constitute the membrane sector of the complex.

It localises to the cell inner membrane. The enzyme catalyses a quinone + NADH + 5 H(+)(in) = a quinol + NAD(+) + 4 H(+)(out). Functionally, NDH-1 shuttles electrons from NADH, via FMN and iron-sulfur (Fe-S) centers, to quinones in the respiratory chain. The immediate electron acceptor for the enzyme in this species is believed to be ubiquinone. Couples the redox reaction to proton translocation (for every two electrons transferred, four hydrogen ions are translocated across the cytoplasmic membrane), and thus conserves the redox energy in a proton gradient. The protein is NADH-quinone oxidoreductase subunit N of Anaplasma marginale (strain Florida).